The chain runs to 87 residues: uncharacterized protein (87 aa).

Residues 52–87 (KWQPRPDANNSDTTTSTEDSTTDTETEYSTTEDELA) form a disordered region. A compositionally biased stretch (acidic residues) spans 71–87 (STTDTETEYSTTEDELA).

This is an uncharacterized protein from Autographa californica nuclear polyhedrosis virus (AcMNPV).